The primary structure comprises 419 residues: eIF5-mimic protein 2 (419 aa).

Residue methionine 1 is modified to N-acetylmethionine. Residues 1 to 15 (MNNQKQQKPTLSGQR) show a composition bias toward polar residues. Residues 1–26 (MNNQKQQKPTLSGQRFKTRKRDEKER) are disordered. A Phosphoserine modification is found at serine 12. The 168-residue stretch at 247–414 (NQQTIGARKE…KNAEEESESE (168 aa)) folds into the W2 domain. A Glycyl lysine isopeptide (Lys-Gly) (interchain with G-Cter in SUMO2) cross-link involves residue lysine 368. A phosphoserine mark is found at serine 411 and serine 413.

It belongs to the BZW family.

Translation initiation regulator which represses repeat-associated non-AUG (RAN) initiated translation probably by acting as a competitive inhibitor of eukaryotic translation initiation factor 5 (EIF5) function. Enhances histone H4 gene transcription but does not seem to bind DNA directly. This chain is eIF5-mimic protein 2 (BZW1), found in Homo sapiens (Human).